The sequence spans 444 residues: Crh-like protein 3 (444 aa).

The N-terminal stretch at 1–19 (MVGKSTLLSVLASASVAFA) is a signal peptide. Cys-27 and Cys-34 are disulfide-bonded. A GH16 domain is found at 57–271 (SLESCVPEPV…WAGGEIDWNS (215 aa)). Glu-157 functions as the Nucleophile in the catalytic mechanism. Residue Glu-161 is the Proton donor of the active site. A chitin-binding site is contributed by Glu-161. 2 N-linked (GlcNAc...) asparagine glycosylation sites follow: Asn-187 and Asn-228. Trp-248 and Thr-259 together coordinate chitin. N-linked (GlcNAc...) asparagine glycans are attached at residues Asn-315, Asn-323, Asn-336, and Asn-371. The GPI-anchor amidated serine moiety is linked to residue Ser-415. Residues 416–444 (ADSLVANQERVLKGSLFAGIVAVVAMMAL) constitute a propeptide, removed in mature form.

It belongs to the glycosyl hydrolase 16 family. CRH1 subfamily. As to quaternary structure, forms homodimers as well as heterodimers with other crh protein members crh1 and crh2. Dimerization may be necessary for the transglycosylation activity.

It localises to the cell membrane. The catalysed reaction is Random endo-hydrolysis of N-acetyl-beta-D-glucosaminide (1-&gt;4)-beta-linkages in chitin and chitodextrins.. Dual chitinase/transglycosylase that plays a role in cell wall architecture. Chitinase and transglycosylase activities are coupled. Required for the polysaccharide cross-linking at the septa and the cell wall. More specifically, transfers chitin to 1,6-beta-glucan in the cell wall. In Botryotinia fuckeliana (strain B05.10) (Noble rot fungus), this protein is Crh-like protein 3.